A 473-amino-acid polypeptide reads, in one-letter code: Protein nucleotidyltransferase YdiU (473 aa).

Positions 79, 81, 82, 102, 114, 115, 165, and 172 each coordinate ATP. The Proton acceptor role is filled by D241. Mg(2+) is bound by residues N242 and D251. An ATP-binding site is contributed by D251.

Belongs to the SELO family. Requires Mg(2+) as cofactor. Mn(2+) serves as cofactor.

It catalyses the reaction L-seryl-[protein] + ATP = 3-O-(5'-adenylyl)-L-seryl-[protein] + diphosphate. It carries out the reaction L-threonyl-[protein] + ATP = 3-O-(5'-adenylyl)-L-threonyl-[protein] + diphosphate. The enzyme catalyses L-tyrosyl-[protein] + ATP = O-(5'-adenylyl)-L-tyrosyl-[protein] + diphosphate. The catalysed reaction is L-histidyl-[protein] + UTP = N(tele)-(5'-uridylyl)-L-histidyl-[protein] + diphosphate. It catalyses the reaction L-seryl-[protein] + UTP = O-(5'-uridylyl)-L-seryl-[protein] + diphosphate. It carries out the reaction L-tyrosyl-[protein] + UTP = O-(5'-uridylyl)-L-tyrosyl-[protein] + diphosphate. Nucleotidyltransferase involved in the post-translational modification of proteins. It can catalyze the addition of adenosine monophosphate (AMP) or uridine monophosphate (UMP) to a protein, resulting in modifications known as AMPylation and UMPylation. This chain is Protein nucleotidyltransferase YdiU, found in Marinomonas sp. (strain MWYL1).